A 549-amino-acid polypeptide reads, in one-letter code: CTP synthase (549 aa).

An amidoligase domain region spans residues 1 to 272; the sequence is MPPKSSTTKH…DAYVVRRMDL (272 aa). Ser19 serves as a coordination point for CTP. Residue Ser19 participates in UTP binding. Residues 20-25 and Asp77 contribute to the ATP site; that span reads SLGKGL. Residues Asp77 and Glu146 each coordinate Mg(2+). Residues 153–155, 193–198, and Lys229 each bind CTP; these read DIE and KTKPTQ. Residues 193–198 and Lys229 each bind UTP; that span reads KTKPTQ. Residues 301–548 enclose the Glutamine amidotransferase type-1 domain; it reads VGKYIDLPDA…VKAAVERKTS (248 aa). Residue Gly360 participates in L-glutamine binding. Cys387 serves as the catalytic Nucleophile; for glutamine hydrolysis. Residues 388 to 391, Glu411, and Arg473 contribute to the L-glutamine site; that span reads LGLQ. Residues His521 and Glu523 contribute to the active site.

This sequence belongs to the CTP synthase family. As to quaternary structure, homotetramer.

The enzyme catalyses UTP + L-glutamine + ATP + H2O = CTP + L-glutamate + ADP + phosphate + 2 H(+). The catalysed reaction is L-glutamine + H2O = L-glutamate + NH4(+). It catalyses the reaction UTP + NH4(+) + ATP = CTP + ADP + phosphate + 2 H(+). Its pathway is pyrimidine metabolism; CTP biosynthesis via de novo pathway; CTP from UDP: step 2/2. Its activity is regulated as follows. Allosterically activated by GTP, when glutamine is the substrate; GTP has no effect on the reaction when ammonia is the substrate. The allosteric effector GTP functions by stabilizing the protein conformation that binds the tetrahedral intermediate(s) formed during glutamine hydrolysis. Inhibited by the product CTP, via allosteric rather than competitive inhibition. Catalyzes the ATP-dependent amination of UTP to CTP with either L-glutamine or ammonia as the source of nitrogen. Regulates intracellular CTP levels through interactions with the four ribonucleotide triphosphates. This chain is CTP synthase, found in Streptomyces coelicolor (strain ATCC BAA-471 / A3(2) / M145).